The following is an 875-amino-acid chain: F-box only protein 41 (875 aa).

Disordered stretches follow at residues 85 to 110, 165 to 194, and 347 to 542; these read ESTS…HHHH, SSAC…PSPA, and SSSC…PSRS. Residues 170 to 182 show a composition bias toward pro residues; sequence TPPPGPGPGPCPG. A compositionally biased stretch (low complexity) spans 183–194; that stretch reads PASASPASPSPA. A coiled-coil region spans residues 209–351; it reads ALEKLEVDRR…QLQVISSSCG (143 aa). Polar residues predominate over residues 347-356; sequence SSSCGSTPSA. Residues 359 to 368 show a composition bias toward gly residues; it reads GRGGGGGGAG. An Omega-N-methylarginine modification is found at arginine 360. Positions 395-416 are enriched in polar residues; it reads HGSSPSTGASSRVPAASQSSGC. Phosphoserine is present on serine 478. Threonine 479 carries the post-translational modification Phosphothreonine. The region spanning 496–540 is the F-box domain; it reads SEAEGPLDAPRPGPAMAGPLSSCRLSARPEGGSGRGRRAERVSPS. Serine 762 is subject to Phosphoserine.

In terms of assembly, directly interacts with SKP1 and CUL1.

Functionally, substrate-recognition component of the SCF (SKP1-CUL1-F-box protein)-type E3 ubiquitin ligase complex. The chain is F-box only protein 41 (FBXO41) from Homo sapiens (Human).